Reading from the N-terminus, the 734-residue chain is Polyribonucleotide nucleotidyltransferase (734 aa).

Mg(2+)-binding residues include Asp-503 and Asp-509. Residues 570-629 enclose the KH domain; it reads PKLSTIQVPVDAIGMIIGKGGETIRSITEETGAQINVDDDGTVTISSPNGESAAAAIETI. The region spanning 639–713 is the S1 motif domain; the sequence is GTIYMGKVKD…GKIRYALSIK (75 aa).

It belongs to the polyribonucleotide nucleotidyltransferase family. Mg(2+) is required as a cofactor.

Its subcellular location is the cytoplasm. It catalyses the reaction RNA(n+1) + phosphate = RNA(n) + a ribonucleoside 5'-diphosphate. Involved in mRNA degradation. Catalyzes the phosphorolysis of single-stranded polyribonucleotides processively in the 3'- to 5'-direction. This is Polyribonucleotide nucleotidyltransferase from Chlorobium phaeobacteroides (strain BS1).